A 103-amino-acid polypeptide reads, in one-letter code: Small ribosomal subunit protein uS10 (103 aa).

The protein belongs to the universal ribosomal protein uS10 family. As to quaternary structure, part of the 30S ribosomal subunit.

In terms of biological role, involved in the binding of tRNA to the ribosomes. This chain is Small ribosomal subunit protein uS10, found in Polynucleobacter necessarius subsp. necessarius (strain STIR1).